Here is a 301-residue protein sequence, read N- to C-terminus: MSTAYDDIKTRLQGSMVALITPMLRDGTVDYKRLADLIDWQIEQGTHCLVAVGTTGESATLSMQEHSDVIRYFVQHVKGRVPVIAGTGANNTMEAIKLTQDAADAGADCALLVAPYYNKPPQEGLYQHYKAIAEAVNIPQMLYNVPGRTVVDIAQETVERLADLGNIVAIKDATGSVARGEQLIKVVGDRLVVLSGDDGSALELMKVGGKGNISVTANVVPKAMSETFTAALRGDFDAANQVHDVVKHLHRDLFIESSPIPAKYALHKMGMIDKGIRLPLVWLAEQHHATIDTALVRANLL.

T55 is a pyruvate binding site. Y143 serves as the catalytic Proton donor/acceptor. K171 functions as the Schiff-base intermediate with substrate in the catalytic mechanism. I213 is a binding site for pyruvate.

The protein belongs to the DapA family. As to quaternary structure, homotetramer; dimer of dimers.

It is found in the cytoplasm. It catalyses the reaction L-aspartate 4-semialdehyde + pyruvate = (2S,4S)-4-hydroxy-2,3,4,5-tetrahydrodipicolinate + H2O + H(+). It functions in the pathway amino-acid biosynthesis; L-lysine biosynthesis via DAP pathway; (S)-tetrahydrodipicolinate from L-aspartate: step 3/4. Functionally, catalyzes the condensation of (S)-aspartate-beta-semialdehyde [(S)-ASA] and pyruvate to 4-hydroxy-tetrahydrodipicolinate (HTPA). This Psychrobacter arcticus (strain DSM 17307 / VKM B-2377 / 273-4) protein is 4-hydroxy-tetrahydrodipicolinate synthase.